Reading from the N-terminus, the 677-residue chain is Probable serine/threonine-protein kinase mkcF (677 aa).

The 58-residue stretch at 1-58 (MLYLVATGDYKGPSENHLSFTKGQRIEFLERTENGFIKGKLDGKVGIFPSSLITIETR) folds into the SH3 domain. Residues 72-244 (TETKDDTGSI…SSSSSSTKRR (173 aa)) are disordered. The segment covering 79 to 94 (GSISSSTSTSTSSLTT) has biased composition (low complexity). Residues 105-126 (GEQQPSTSTINGQSSSTSPILQ) show a composition bias toward polar residues. Residues 127 to 146 (SNGTTNTTTSSTSNNNIGDN) show a composition bias toward low complexity. Positions 158–174 (TTSNHSKSASRLSVASF) are enriched in polar residues. Over residues 175–192 (STTTTATTTTTTTTTATS) the composition is skewed to low complexity. Over residues 209–224 (DKKSKDDDKSEKEGLY) the composition is skewed to basic and acidic residues. Residues 230-240 (SSSSSSSSSSS) are compositionally biased toward low complexity. In terms of domain architecture, Protein kinase spans 401–646 (IKFTHMVGRG…VDKLMRHPFF (246 aa)). Residues 407-415 (VGRGQYGKV) and Lys-428 each bind ATP. Asp-519 functions as the Proton acceptor in the catalytic mechanism.

Belongs to the protein kinase superfamily. Ser/Thr protein kinase family. STE20 subfamily. It depends on Mg(2+) as a cofactor.

The catalysed reaction is L-seryl-[protein] + ATP = O-phospho-L-seryl-[protein] + ADP + H(+). It carries out the reaction L-threonyl-[protein] + ATP = O-phospho-L-threonyl-[protein] + ADP + H(+). This is Probable serine/threonine-protein kinase mkcF from Dictyostelium discoideum (Social amoeba).